Reading from the N-terminus, the 144-residue chain is Interleukin-3 (144 aa).

A signal peptide spans 1 to 17; the sequence is MSSLSILHLLLLLLALH.

This sequence belongs to the IL-3 family. As to quaternary structure, monomer.

The protein localises to the secreted. Functionally, granulocyte/macrophage colony-stimulating factors are cytokines that act in hematopoiesis by controlling the production, differentiation, and function of 2 related white cell populations of the blood, the granulocytes and the monocytes-macrophages. This CSF induces granulocytes, macrophages, mast cells, stem cells, erythroid cells, eosinophils and megakaryocytes. This chain is Interleukin-3 (IL3), found in Bos taurus (Bovine).